A 260-amino-acid polypeptide reads, in one-letter code: MRILITNDDGINAPGLAALEQVALELAGPGGEVWTVAPAFEQSGVGHCISYTHPMLIARMGERRFAAEGSPADCVLAGLHDVMKDAPPDLVLSGVNRGNNSAENALYSGTLGGAMEAALQGLRAIALSQFFGPRNYGRTDPFEIAQSHGVQVIRRILDTWPQERPDYRLFYNVNFPPVPAAEVKGLRAVRQGFREGTRFSAEPHLSPSGKRFLWIKGGDQQQRTAPGTDAAANLDGYVSVTPMRADLTADDALEALQATL.

D8, D9, S43, and N96 together coordinate a divalent metal cation.

This sequence belongs to the SurE nucleotidase family. Requires a divalent metal cation as cofactor.

The protein localises to the cytoplasm. The enzyme catalyses a ribonucleoside 5'-phosphate + H2O = a ribonucleoside + phosphate. Its function is as follows. Nucleotidase that shows phosphatase activity on nucleoside 5'-monophosphates. This chain is 5'-nucleotidase SurE, found in Ruegeria pomeroyi (strain ATCC 700808 / DSM 15171 / DSS-3) (Silicibacter pomeroyi).